The primary structure comprises 310 residues: Protein translocase subunit SecF (310 aa).

The next 6 helical transmembrane spans lie at 18–38 (FFTI…YRGG), 135–155 (QAVY…AFRF), 162–182 (IVSV…VILA), 188–208 (ITIV…TIVL), 240–260 (IVTS…GGEV), and 267–287 (IMII…APLI).

The protein belongs to the SecD/SecF family. SecF subfamily. Forms a complex with SecD. Part of the essential Sec protein translocation apparatus which comprises SecA, SecYEG and auxiliary proteins SecDF. Other proteins may also be involved.

It localises to the cell inner membrane. Functionally, part of the Sec protein translocase complex. Interacts with the SecYEG preprotein conducting channel. SecDF uses the proton motive force (PMF) to complete protein translocation after the ATP-dependent function of SecA. The sequence is that of Protein translocase subunit SecF from Endomicrobium trichonymphae.